The primary structure comprises 643 residues: Fructose-1,6-bisphosphatase class 3 (643 aa).

Belongs to the FBPase class 3 family. The cofactor is Mn(2+).

It carries out the reaction beta-D-fructose 1,6-bisphosphate + H2O = beta-D-fructose 6-phosphate + phosphate. It participates in carbohydrate biosynthesis; gluconeogenesis. This chain is Fructose-1,6-bisphosphatase class 3, found in Lacticaseibacillus paracasei (strain ATCC 334 / BCRC 17002 / CCUG 31169 / CIP 107868 / KCTC 3260 / NRRL B-441) (Lactobacillus paracasei).